The sequence spans 344 residues: Fructose-1,6-bisphosphatase class 1 (344 aa).

Mg(2+)-binding residues include glutamate 92, aspartate 115, leucine 117, and aspartate 118. Residues 118–121 (DGSS), asparagine 211, tyrosine 244, and lysine 274 each bind substrate. A Mg(2+)-binding site is contributed by glutamate 280.

Belongs to the FBPase class 1 family. As to quaternary structure, homotetramer. Mg(2+) serves as cofactor.

The protein resides in the cytoplasm. The catalysed reaction is beta-D-fructose 1,6-bisphosphate + H2O = beta-D-fructose 6-phosphate + phosphate. It participates in carbohydrate biosynthesis; gluconeogenesis. The chain is Fructose-1,6-bisphosphatase class 1 from Aeromonas salmonicida (strain A449).